The chain runs to 312 residues: Probable myosin light chain kinase DDB_G0282429 (312 aa).

The interval 1-28 (MDRMDSSDEEIDNISDDELQSGDEIEVE) is disordered. Positions 7–27 (SDEEIDNISDDELQSGDEIEV) are enriched in acidic residues. Positions 38 to 290 (YILGNEIGRG…FEQCLIHPWV (253 aa)) constitute a Protein kinase domain. Residues 44–52 (IGRGAFSIV) and lysine 67 each bind ATP. Aspartate 158 serves as the catalytic Proton acceptor.

It belongs to the protein kinase superfamily. CAMK Ser/Thr protein kinase family. CaMK subfamily.

It carries out the reaction L-seryl-[myosin light chain] + ATP = O-phospho-L-seryl-[myosin light chain] + ADP + H(+). The enzyme catalyses L-threonyl-[myosin light chain] + ATP = O-phospho-L-threonyl-[myosin light chain] + ADP + H(+). Its activity is regulated as follows. Does not have a calmodulin-binding domain. May phosphorylate a specific serine in the N-terminus of a myosin light chain. This Dictyostelium discoideum (Social amoeba) protein is Probable myosin light chain kinase DDB_G0282429.